A 340-amino-acid chain; its full sequence is GTP-binding protein REM 2 (340 aa).

Residues 1 to 13 (MHTDLDTDMDMDT) show a composition bias toward acidic residues. Positions 1 to 107 (MHTDLDTDMD…SDSLGSGEAA (107 aa)) are disordered. The residue at position 27 (S27) is a Phosphoserine. The span at 40–53 (LLKKSEKLLAELDR) shows a compositional bias: basic and acidic residues. Low complexity predominate over residues 93–104 (SSSGSSDSLGSG). GTP-binding positions include 121–128 (GESGVGKS), 229–232 (NKSD), and 260–261 (AA). A disordered region spans residues 283 to 308 (RNHAGGQRPDPGSPEGPAPPARRESL). A compositionally biased stretch (pro residues) spans 293–302 (PGSPEGPAPP). S295 carries the post-translational modification Phosphoserine.

Belongs to the small GTPase superfamily. RGK family.

The protein localises to the cell membrane. Binds GTP saturably and exhibits a low intrinsic rate of GTP hydrolysis. In Homo sapiens (Human), this protein is GTP-binding protein REM 2 (REM2).